The sequence spans 297 residues: Phosphatidylinositol N-acetylglucosaminyltransferase subunit C (297 aa).

The next 4 membrane-spanning stretches (helical) occupy residues Val-67–Gly-87, Thr-88–Gly-108, Ser-153–Val-173, and Ala-239–Phe-259.

The protein belongs to the PIGC family. As to quaternary structure, component of the glycosylphosphatidylinositol-N-acetylglucosaminyltransferase (GPI-GnT) complex composed at least by PIGA, PIGC, PIGH, PIGP, PIGQ, PIGY and DPM2. Interacts with PIGQ. Interacts with the heterodimer PIGA:PIGH.

The protein localises to the endoplasmic reticulum membrane. It participates in glycolipid biosynthesis; glycosylphosphatidylinositol-anchor biosynthesis. Its function is as follows. Part of the glycosylphosphatidylinositol-N-acetylglucosaminyltransferase (GPI-GnT) complex that catalyzes the transfer of N-acetylglucosamine from UDP-N-acetylglucosamine to phosphatidylinositol and participates in the first step of GPI biosynthesis. The protein is Phosphatidylinositol N-acetylglucosaminyltransferase subunit C of Rattus norvegicus (Rat).